The chain runs to 127 residues: Fluoride-specific ion channel FluC (127 aa).

The next 4 membrane-spanning stretches (helical) occupy residues 4–24 (LLLA…MLSM), 35–55 (IGTL…FAWF), 71–91 (TGFC…VFLL), and 103–123 (VLIN…LFSA). 2 residues coordinate Na(+): Gly-75 and Thr-78.

Belongs to the fluoride channel Fluc/FEX (TC 1.A.43) family.

It localises to the cell inner membrane. The enzyme catalyses fluoride(in) = fluoride(out). With respect to regulation, na(+) is not transported, but it plays an essential structural role and its presence is essential for fluoride channel function. Fluoride-specific ion channel. Important for reducing fluoride concentration in the cell, thus reducing its toxicity. The polypeptide is Fluoride-specific ion channel FluC (Salmonella agona (strain SL483)).